Consider the following 212-residue polypeptide: MTPLVGVDEAGKGPVVGSMFVAAVRAPTEALPDGIDDSKRLTDDRREALADRLRDADRIDVAVVECQPADIDDANMNDLTVAAHAAALDGVAASGETVLCDAGDVDAGRFADRVAAAATLDVSVAAEHGADGSDDLVGAASIIAKSARERHVEQLSEQYGAVGSGYPSDPTTKAFLREAFEQEGGFPPCVRTSWSTCERIRAEAEQTDLDGF.

Residues 2 to 206 (TPLVGVDEAG…CERIRAEAEQ (205 aa)) enclose the RNase H type-2 domain. Aspartate 8, glutamate 9, and aspartate 101 together coordinate a divalent metal cation.

It belongs to the RNase HII family. It depends on Mn(2+) as a cofactor. Mg(2+) serves as cofactor.

It localises to the cytoplasm. It carries out the reaction Endonucleolytic cleavage to 5'-phosphomonoester.. Functionally, endonuclease that specifically degrades the RNA of RNA-DNA hybrids. In Natronomonas pharaonis (strain ATCC 35678 / DSM 2160 / CIP 103997 / JCM 8858 / NBRC 14720 / NCIMB 2260 / Gabara) (Halobacterium pharaonis), this protein is Ribonuclease HII.